A 338-amino-acid polypeptide reads, in one-letter code: MEPVSMDKPFMYFDEIDDELEYEPESVNETPKKLPHQGQLKLLLGELFFLSKLQRHGILDGSTIVYIGSAPGTHIKYLRDHFMSMGLVIKWMLIDGRTHDPILEGLRDVILITKFVDEAYIRQLKKQLYPSRVILISDVRSKRGQKEPTTQDLLSNYSLQNIMVSVLKPAASSLKWRCPFPDQWIKDFYVPHGNEMLQPFAPSYSAEMRLLSIYSGTPIRLKCITQQDSSKYEKKMYYLNKIIRNRIIINFDYSNQEYDFFHMYHMLKTVYSNKSFTSNKSKVLHFHQSIFRFLKIPITNTEKIHHEPTQRKVPSKNTMLKSRNTKKSVRGNKQGRRT.

Residue Y22 coordinates mRNA. Residues Q39, Y66, G68, G72, D95, R97, V116, and D138 each coordinate S-adenosyl-L-methionine. Residues 169-249 (PAASSLKWRC…NKIIRNRIII (81 aa)) form a binding to NPH-I region. Residues 169–333 (PAASSLKWRC…NTKKSVRGNK (165 aa)) form a binding to Rap94 region. K175 functions as the For methyltransferase activity in the catalytic mechanism. MRNA is bound by residues 177 to 180 (RCPF), D182, 205 to 207 (SAE), and E233. The interval 305 to 338 (HHEPTQRKVPSKNTMLKSRNTKKSVRGNKQGRRT) is disordered. Over residues 323 to 338 (RNTKKSVRGNKQGRRT) the composition is skewed to basic residues.

It belongs to the class I-like SAM-binding methyltransferase superfamily. Poxvirus/kinetoplastid 2'-O-MTase family. Interacts with poly(A) polymerase catalytic subunit OPG063. Interacts with OPG109 and OPG123; these interactions might help linking transcription to capping and polyadenylation.

It is found in the virion. The catalysed reaction is a 5'-end (N(7)-methyl 5'-triphosphoguanosine)-ribonucleoside in mRNA + S-adenosyl-L-methionine = a 5'-end (N(7)-methyl 5'-triphosphoguanosine)-(2'-O-methyl-ribonucleoside) in mRNA + S-adenosyl-L-homocysteine + H(+). Its function is as follows. Displays methyltransferase, positive regulation of the poly(A) polymerase and transcription elongation activities. Involved in the modification of both mRNA ends and in intermediate and late gene positive transcription elongation. At the mRNAs 5' end, methylates the ribose 2' OH group of the first transcribed nucleotide, thereby producing a 2'-O-methylpurine cap. At the 3' end, functions as a processivity factor which stimulates the activity of the viral poly(A) polymerase OPG063 that creates mRNA's poly(A) tail. In the presence of OPG102, OPG063 does not dissociate from the RNA allowing tail elongation to around 250 adenylates. The protein is Cap-specific mRNA (nucleoside-2'-O-)-methyltransferase (OPG102) of Oryctolagus cuniculus (Rabbit).